A 510-amino-acid polypeptide reads, in one-letter code: MTTSIIERIDAWAEKTPDFPCYEYAGTRLSYKELKRQSDAFGSFLLNTLNSDKEKPIIVYGHMSPLMLIAFLGTIKSGRAYVPVDVSMPVERIEQIKKAADPALFICTEELPSNLTITGCPVLTQDQLMDALEKHFEEVPDPAECVKNDDNYYIIYTSGSTGNPKGVQISQNNLVSFSNWILQDFSLRQGLRFLNQAPFSFDLSVMDLYPSLLSGGTLVPLDKTITANMKDLYREIPAQNFDVWVSTPSFADLCLLDDNFNQENNPNLTRFLFCGEVLAKKTASELLDRFPDAVIYNTYGPTEATVAVTQVKVTRELIDAYPSLPLGVIKPDMRLHIVDQETGEILPEGEKGEIILIGASVSKGYLNEPEKTDQVFFDYKGYQAYHTGDSGVIKDGYLFFQGRLDFQIKLHGYRIELEDIENNLKKVSYIQNCAIIPKMKDEKVDMLVAQVIPSSHDFEKEYQLSAAIKNELKEFMPAYMIPRKWIYKTEFPLTMNGKIDRKALNSEVNK.

An ATP-binding site is contributed by 157–158 (TS). D202 contacts D-alanine. 297-302 (NTYGPT) is a binding site for ATP. Residue V306 coordinates D-alanine. ATP is bound by residues D389 and K498. A D-alanine-binding site is contributed by K498.

The protein belongs to the ATP-dependent AMP-binding enzyme family. DltA subfamily.

Its subcellular location is the cytoplasm. It catalyses the reaction holo-[D-alanyl-carrier protein] + D-alanine + ATP = D-alanyl-[D-alanyl-carrier protein] + AMP + diphosphate. Its pathway is cell wall biogenesis; lipoteichoic acid biosynthesis. Catalyzes the first step in the D-alanylation of lipoteichoic acid (LTA), the activation of D-alanine and its transfer onto the D-alanyl carrier protein (Dcp) DltC. In an ATP-dependent two-step reaction, forms a high energy D-alanyl-AMP intermediate, followed by transfer of the D-alanyl residue as a thiol ester to the phosphopantheinyl prosthetic group of the Dcp. D-alanylation of LTA plays an important role in modulating the properties of the cell wall in Gram-positive bacteria, influencing the net charge of the cell wall. This is D-alanine--D-alanyl carrier protein ligase from Listeria innocua serovar 6a (strain ATCC BAA-680 / CLIP 11262).